We begin with the raw amino-acid sequence, 356 residues long: UDP-3-O-acylglucosamine N-acyltransferase (356 aa).

The active-site Proton acceptor is the His-242.

It belongs to the transferase hexapeptide repeat family. LpxD subfamily. As to quaternary structure, homotrimer.

It catalyses the reaction a UDP-3-O-[(3R)-3-hydroxyacyl]-alpha-D-glucosamine + a (3R)-hydroxyacyl-[ACP] = a UDP-2-N,3-O-bis[(3R)-3-hydroxyacyl]-alpha-D-glucosamine + holo-[ACP] + H(+). Its pathway is bacterial outer membrane biogenesis; LPS lipid A biosynthesis. Its function is as follows. Catalyzes the N-acylation of UDP-3-O-acylglucosamine using 3-hydroxyacyl-ACP as the acyl donor. Is involved in the biosynthesis of lipid A, a phosphorylated glycolipid that anchors the lipopolysaccharide to the outer membrane of the cell. This Acinetobacter baumannii (strain AB0057) protein is UDP-3-O-acylglucosamine N-acyltransferase.